The sequence spans 251 residues: tRNA (guanine-N(7)-)-methyltransferase (251 aa).

The tract at residues M1–V29 is disordered. E84, E109, D136, and D159 together coordinate S-adenosyl-L-methionine. D159 is a catalytic residue. K163 contacts substrate. The segment at R165 to R170 is interaction with RNA. Residues D195 and T230–E233 each bind substrate.

The protein belongs to the class I-like SAM-binding methyltransferase superfamily. TrmB family.

The enzyme catalyses guanosine(46) in tRNA + S-adenosyl-L-methionine = N(7)-methylguanosine(46) in tRNA + S-adenosyl-L-homocysteine. It participates in tRNA modification; N(7)-methylguanine-tRNA biosynthesis. In terms of biological role, catalyzes the formation of N(7)-methylguanine at position 46 (m7G46) in tRNA. This is tRNA (guanine-N(7)-)-methyltransferase from Acidovorax sp. (strain JS42).